The following is a 927-amino-acid chain: F-box only protein 11 (927 aa).

The tract at residues 1–132 is disordered; sequence MNSVRAANRR…STSTTENFGH (132 aa). A compositionally biased stretch (basic residues) spans 7–16; the sequence is ANRRPRRVSR. Low complexity predominate over residues 17 to 27; sequence PRPVQQQQQQP. The span at 28–68 shows a compositional bias: pro residues; sequence PQQPPPQPPQQQPPQQQPPPPPQQQQQQQPPPPPPPPPPLP. Positions 114–129 are enriched in polar residues; the sequence is PTKNSMEGASTSTTEN. Positions 153 to 199 constitute an F-box domain; the sequence is QYLQEKLPDEVVLKIFSYLLEQDLCRAACVCKRFSELANDPILWKRL. 19 PbH1 repeats span residues 395–417, 418–440, 441–463, 464–486, 487–509, 510–532, 533–555, 556–578, 579–601, 602–624, 625–647, 648–670, 671–693, 694–716, 717–739, 740–762, 763–785, 786–808, and 809–830; these read GACP…YITD, HAQG…WVKN, HGNP…FTFD, HGMG…EVKA, YANP…YVHE, KGRG…WITS, NSDP…YIFG, DGRG…QIRT, NSCP…YVHE, KGQG…WVTT, GSTP…YFYD, NGHG…QIRT, GSNP…LVYN, SGLG…WIKT, DSNP…CIFN, GGRG…LIST, NSHP…EITN, HATA…FLAS, and GVNV…EKAV. The UBR-type zinc-finger motif lies at 833–904; sequence GQCLYKISSY…LSNPCTLAGE (72 aa).

In terms of assembly, component of the SCF(FBXO11) complex consisting of CUL1, RBX1, SKP1 and FBXO11. Interacts with CIITA. In terms of tissue distribution, isoform 5 is expressed in keratinocytes, fibroblasts and melanocytes.

Its subcellular location is the nucleus. It is found in the chromosome. Its pathway is protein modification; protein ubiquitination. Its function is as follows. Substrate recognition component of a SCF (SKP1-CUL1-F-box protein) E3 ubiquitin-protein ligase complex which mediates the ubiquitination and subsequent proteasomal degradation of target proteins, such as DTL/CDT2, BCL6, SNAI1 and PRDM1/BLIMP1. The SCF(FBXO11) complex mediates ubiquitination and degradation of BCL6, thereby playing a role in the germinal center B-cells terminal differentiation toward memory B-cells and plasma cells. The SCF(FBXO11) complex also mediates ubiquitination and degradation of DTL, an important step for the regulation of TGF-beta signaling, cell migration and the timing of the cell-cycle progression and exit. The SCF(FBXO11) complex also catalyzes ubiquitination and degradation of GSK3B-phosphorylated SNAI1. Binds to and neddylates phosphorylated p53/TP53, inhibiting its transcriptional activity. Plays a role in the regulatiom of erythropoiesis but not myelopoiesis or megakaryopoiesis. Mechanistically, activates erythroid genes by mediating the degradation of BAHD1, a heterochromatin-associated protein that recruits corepressors to H3K27me3 marks. Participates in macrophage cell death and inflammation in response to bacterial toxins by regulating the expression of complement 5a receptor 1/C5AR1 and IL-1beta. Acts as a critical regulator to determine the level of MHC-II by mediating the recognition of degron at the P/S/T domain of CIITA leading to its ubiquitination and subsequent degradation via the proteasome. Participates in the antiviral repsonse by initiating the activation of TBK1-IRF3-IFN-I axis. Mediates the 'Lys-63'-linked ubiquitination of TRAF3 to strengthen the interaction between TRAF3 and TBK1. This Homo sapiens (Human) protein is F-box only protein 11.